We begin with the raw amino-acid sequence, 205 residues long: Protein TGAM_1450 (205 aa).

Residues 7–201 (EWGEFLVRLA…EEYPRGPVRR (195 aa)) form the AMMECR1 domain.

The protein is Protein TGAM_1450 of Thermococcus gammatolerans (strain DSM 15229 / JCM 11827 / EJ3).